Here is a 1041-residue protein sequence, read N- to C-terminus: Beta-galactosidase (1041 aa).

Residues N103 and D201 each coordinate substrate. A Na(+)-binding site is contributed by D201. Mg(2+) is bound by residues E415, H417, and E460. Residues E460 and 536–539 (EYAH) each bind substrate. E460 serves as the catalytic Proton donor. The active-site Nucleophile is E536. Mg(2+) is bound at residue N596. Residues F600 and N603 each contribute to the Na(+) site. Substrate-binding residues include N603 and W1016.

Belongs to the glycosyl hydrolase 2 family. As to quaternary structure, homotetramer. Mg(2+) serves as cofactor. It depends on Na(+) as a cofactor.

It carries out the reaction Hydrolysis of terminal non-reducing beta-D-galactose residues in beta-D-galactosides.. The chain is Beta-galactosidase from Alteromonas mediterranea (strain DSM 17117 / CIP 110805 / LMG 28347 / Deep ecotype).